A 95-amino-acid polypeptide reads, in one-letter code: Toxin Tbo-IT2 (95 aa).

Positions 1–23 are cleaved as a signal peptide; it reads MTMKTLCLSLIVIGVLILVAVKA. A propeptide spanning residues 24-53 is cleaved from the precursor; the sequence is EDYVNINSLEEAPEENVNINNLEETPEESR. 5 disulfides stabilise this stretch: cysteine 54-cysteine 68, cysteine 61-cysteine 73, cysteine 67-cysteine 84, cysteine 70-cysteine 92, and cysteine 75-cysteine 82. Cysteine amide is present on cysteine 92.

The protein belongs to the neurotoxin 02 (plectoxin) family. 02 (plectoxin) subfamily. In terms of tissue distribution, expressed by the venom gland.

The protein localises to the secreted. Functionally, this recombinant (non-amidated) toxin shows insecticidal activity on larvae of the housefly Musca domestica and has no activity on a panel of expressed neuronal receptors and ion channels. This chain is Toxin Tbo-IT2, found in Tibellus oblongus (Oblong running crab spider).